The primary structure comprises 880 residues: GATOR2 complex protein MIOS-A (880 aa).

WD repeat units lie at residues 60–102 (SDTP…NSKC), 113–157 (KHAR…TPEV), 185–224 (GQND…QKMF), 226–264 (NTKA…KPVL), 268–309 (EQPK…TPIG), and 399–441 (RLRA…KQYA). Residues 740-786 (VSCNFCGKSISYSCSSVPHQGRGFSQYGVSGSPTKSKFTSCPGCRKP) form a C4-type zinc finger. Zn(2+)-binding residues include cysteine 742, cysteine 745, cysteine 780, cysteine 783, cysteine 793, cysteine 832, cysteine 835, histidine 837, histidine 840, histidine 843, cysteine 854, cysteine 859, and cysteine 863. An RING-type; atypical zinc finger spans residues 787 to 868 (LPRCALCLIN…CSCKCMQLDT (82 aa)).

The protein belongs to the WD repeat mio family. In terms of assembly, component of the GATOR2 subcomplex, composed of MIOS, SEC13, SEH1L, WDR24 and WDR59. The GATOR2 complex interacts with CASTOR1 and CASTOR2; the interaction is negatively regulated by arginine. The GATOR2 complex interacts with SESN1, SESN2 and SESN3; the interaction is negatively regulated by amino acids. Interacts with SAR1; the interaction is direct, disrupted by leucine and mediates the interaction of SAR1 with the GATOR2 complex to negatively regulate the TORC1 signaling upon leucine deprivation.

Its subcellular location is the lysosome membrane. Its activity is regulated as follows. The GATOR2 complex is negatively regulated by the upstream amino acid sensors CASTOR1 and SESN2, which sequester the GATOR2 complex in absence of amino acids. In the presence of abundant amino acids, GATOR2 is released from CASTOR1 and SESN2 and activated. In terms of biological role, as a component of the GATOR2 complex, functions as an activator of the amino acid-sensing branch of the mTORC1 signaling pathway. The GATOR2 complex indirectly activates mTORC1 through the inhibition of the GATOR1 subcomplex. GATOR2 probably acts as an E3 ubiquitin-protein ligase toward GATOR1. In the presence of abundant amino acids, the GATOR2 complex mediates ubiquitination of the NPRL2 core component of the GATOR1 complex, leading to GATOR1 inactivation. In the absence of amino acids, GATOR2 is inhibited, activating the GATOR1 complex. Within the GATOR2 complex, MIOS is required to prevent autoubiquitination of WDR24, the catalytic subunit of the complex. This Xenopus laevis (African clawed frog) protein is GATOR2 complex protein MIOS-A.